Consider the following 241-residue polypeptide: MSKRSKSLRAADAKIDRDKLYAPLEAVRLAKETSTSKFDGTVEVAFRLGVDPRKADQMVRGTVNLPHGTGKTARVLVFATGDRAEAATAAGADIVGSDELIDEVSKGRLDFDAVVATPDLMGKVGRLGRVLGPRGLMPNPKTGTVTPDVAKAVNDIKGGKIEFRVDKHSNLHFIIGKTSFDDTKLVENYGAALEEILRLKPSAAKGRYIKKAALSTTMGPGIPLDSNRTRNLLVEEDPAAV.

Belongs to the universal ribosomal protein uL1 family. As to quaternary structure, part of the 50S ribosomal subunit.

Binds directly to 23S rRNA. The L1 stalk is quite mobile in the ribosome, and is involved in E site tRNA release. Functionally, protein L1 is also a translational repressor protein, it controls the translation of the L11 operon by binding to its mRNA. The polypeptide is Large ribosomal subunit protein uL1 (Streptomyces coelicolor (strain ATCC BAA-471 / A3(2) / M145)).